The primary structure comprises 194 residues: Adenylate kinase isoenzyme 1 (194 aa).

Position 1 is an N-acetylmethionine (M1). 18 to 23 lines the ATP pocket; sequence GSGKGT. A Phosphoserine modification is found at S38. Residues 38-67 are NMP; that stretch reads STGDLLRAEVSSGSARGKKLSEIMEKGQLV. Residues T39, R44, 65-67, 94-97, and Q101 contribute to the AMP site; these read QLV and GYPR. An LID region spans residues 131–141; the sequence is KRGETSGRVDD. Residue R132 coordinates ATP. The AMP site is built by R138 and R149. G177 serves as a coordination point for ATP.

Belongs to the adenylate kinase family. AK1 subfamily. In terms of assembly, monomer. The cofactor is Mg(2+).

The protein resides in the cytoplasm. It carries out the reaction a ribonucleoside 5'-phosphate + ATP = a ribonucleoside 5'-diphosphate + ADP. It catalyses the reaction AMP + ATP = 2 ADP. The enzyme catalyses dAMP + ATP = dADP + ADP. The catalysed reaction is dATP + AMP = dADP + ADP. It carries out the reaction dAMP + dATP = 2 dADP. It catalyses the reaction a 2'-deoxyribonucleoside 5'-diphosphate + ATP = a 2'-deoxyribonucleoside 5'-triphosphate + ADP. The enzyme catalyses a ribonucleoside 5'-diphosphate + ATP = a ribonucleoside 5'-triphosphate + ADP. The catalysed reaction is CDP + GTP = CTP + GDP. It carries out the reaction GDP + ATP = GTP + ADP. It catalyses the reaction UDP + ATP = UTP + ADP. The enzyme catalyses GTP + UDP = UTP + GDP. The catalysed reaction is dTDP + GTP = dTTP + GDP. It carries out the reaction dCDP + GTP = dCTP + GDP. It catalyses the reaction dGDP + ATP = dGTP + ADP. The enzyme catalyses dADP + GTP = dATP + GDP. The catalysed reaction is thiamine diphosphate + ADP = thiamine triphosphate + AMP. Functionally, catalyzes the reversible transfer of the terminal phosphate group between ATP and AMP. Also displays broad nucleoside diphosphate kinase activity. Plays an important role in cellular energy homeostasis and in adenine nucleotide metabolism. Also catalyzes at a very low rate the synthesis of thiamine triphosphate (ThTP) from thiamine diphosphate (ThDP) and ADP. The polypeptide is Adenylate kinase isoenzyme 1 (Oryctolagus cuniculus (Rabbit)).